A 494-amino-acid polypeptide reads, in one-letter code: AAA-ATPase At2g18190 (494 aa).

The chain crosses the membrane as a helical span at residues 13 to 29; that stretch reads SSLFTAYASLTGFLMLF. Position 251–258 (251–258) interacts with ATP; it reads GPPGTGKS. The segment covering 459 to 470 has biased composition (basic and acidic residues); the sequence is TCRKLDGDDKHN. The tract at residues 459-494 is disordered; that stretch reads TCRKLDGDDKHNVSSTNDLKKTKKKKKGGKGKAKGN. The span at 479-494 shows a compositional bias: basic residues; it reads KTKKKKKGGKGKAKGN.

The protein belongs to the AAA ATPase family. BCS1 subfamily. Mg(2+) serves as cofactor.

It is found in the membrane. It carries out the reaction ATP + H2O = ADP + phosphate + H(+). The protein is AAA-ATPase At2g18190 of Arabidopsis thaliana (Mouse-ear cress).